The following is a 401-amino-acid chain: Enoyl-[acyl-carrier-protein] reductase [NADH] (401 aa).

Residues 48–53, 74–75, 111–112, and 139–140 each bind NAD(+); these read GSSSGY, FE, DA, and LA. Tyrosine 225 serves as a coordination point for substrate. The active-site Proton donor is tyrosine 235. Residues lysine 244 and 273–275 each bind NAD(+); that span reads VVT.

The protein belongs to the TER reductase family. In terms of assembly, monomer.

It catalyses the reaction a 2,3-saturated acyl-[ACP] + NAD(+) = a (2E)-enoyl-[ACP] + NADH + H(+). Its pathway is lipid metabolism; fatty acid biosynthesis. Its function is as follows. Involved in the final reduction of the elongation cycle of fatty acid synthesis (FAS II). Catalyzes the reduction of a carbon-carbon double bond in an enoyl moiety that is covalently linked to an acyl carrier protein (ACP). The chain is Enoyl-[acyl-carrier-protein] reductase [NADH] from Shewanella putrefaciens (strain CN-32 / ATCC BAA-453).